Consider the following 281-residue polypeptide: NADPH-dependent 7-cyano-7-deazaguanine reductase (281 aa).

Residue 88 to 90 coordinates substrate; it reads IES. Residue 90–91 participates in NADPH binding; that stretch reads SK. Residue cysteine 189 is the Thioimide intermediate of the active site. Residue aspartate 196 is the Proton donor of the active site. Position 228 to 229 (228 to 229) interacts with substrate; sequence HE. 257-258 provides a ligand contact to NADPH; sequence RG.

The protein belongs to the GTP cyclohydrolase I family. QueF type 2 subfamily. In terms of assembly, homodimer.

It localises to the cytoplasm. The enzyme catalyses 7-aminomethyl-7-carbaguanine + 2 NADP(+) = 7-cyano-7-deazaguanine + 2 NADPH + 3 H(+). It functions in the pathway tRNA modification; tRNA-queuosine biosynthesis. Its function is as follows. Catalyzes the NADPH-dependent reduction of 7-cyano-7-deazaguanine (preQ0) to 7-aminomethyl-7-deazaguanine (preQ1). This chain is NADPH-dependent 7-cyano-7-deazaguanine reductase, found in Yersinia pseudotuberculosis serotype O:1b (strain IP 31758).